An 875-amino-acid chain; its full sequence is Protein translocase subunit SecA (875 aa).

ATP-binding positions include Gln-87, 105 to 109, and Asp-512; that span reads GEGKT. Residues Cys-860, Cys-862, Cys-871, and His-872 each contribute to the Zn(2+) site.

This sequence belongs to the SecA family. In terms of assembly, monomer and homodimer. Part of the essential Sec protein translocation apparatus which comprises SecA, SecYEG and auxiliary proteins SecDF-YajC and YidC. Requires Zn(2+) as cofactor.

Its subcellular location is the cell inner membrane. The protein resides in the cytoplasm. It carries out the reaction ATP + H2O + cellular proteinSide 1 = ADP + phosphate + cellular proteinSide 2.. In terms of biological role, part of the Sec protein translocase complex. Interacts with the SecYEG preprotein conducting channel. Has a central role in coupling the hydrolysis of ATP to the transfer of proteins into and across the cell membrane, serving both as a receptor for the preprotein-SecB complex and as an ATP-driven molecular motor driving the stepwise translocation of polypeptide chains across the membrane. The sequence is that of Protein translocase subunit SecA from Buchnera aphidicola subsp. Acyrthosiphon pisum (strain APS) (Acyrthosiphon pisum symbiotic bacterium).